We begin with the raw amino-acid sequence, 248 residues long: Probable transcriptional regulatory protein SO_2432 (248 aa).

Belongs to the TACO1 family.

The protein resides in the cytoplasm. This chain is Probable transcriptional regulatory protein SO_2432, found in Shewanella oneidensis (strain ATCC 700550 / JCM 31522 / CIP 106686 / LMG 19005 / NCIMB 14063 / MR-1).